Here is a 254-residue protein sequence, read N- to C-terminus: AA9 family lytic polysaccharide monooxygenase A (254 aa).

Residues 1 to 19 (MKYSILGLTALSFVASAAA) form the signal peptide. His20 is a binding site for Cu(2+). His20 carries the post-translational modification Methylhistidine. (1,4-beta-D-glucosyl)n is bound at residue Val28. Residue Asn52 is glycosylated (N-linked (GlcNAc...) asparagine). Cysteines 60 and 186 form a disulfide. The (1,4-beta-D-glucosyl)n site is built by Val66, Val67, Asp77, and Asn86. A Cu(2+)-binding site is contributed by His97. An N-linked (GlcNAc...) asparagine glycan is attached at Asn129. 2 residues coordinate (1,4-beta-D-glucosyl)n: Val148 and Arg159. Positions 166 and 181 each coordinate O2. Tyr183 is a Cu(2+) binding site.

The protein belongs to the polysaccharide monooxygenase AA9 family. Cu(2+) is required as a cofactor. The catalytically essential N-terminal histidine His-20 is post-translationally modified by methylation to prevent protonation of the histidine side chain, and protect the critical active site of the enzyme from oxidative damage.

It localises to the secreted. The catalysed reaction is [(1-&gt;4)-beta-D-glucosyl]n+m + reduced acceptor + O2 = 4-dehydro-beta-D-glucosyl-[(1-&gt;4)-beta-D-glucosyl]n-1 + [(1-&gt;4)-beta-D-glucosyl]m + acceptor + H2O.. With respect to regulation, the polyphenol cinnamtannin B1 contained in methanolic extract of Cinnamomum cassia (cinnamon) acts as an inhibitor of catalytic activity. Its function is as follows. Lytic polysaccharide monooxygenase (LPMO) that depolymerizes crystalline and amorphous polysaccharides via the oxidation of scissile alpha- or beta-(1-4)-glycosidic bonds, yielding C1 or C4 oxidation product. Catalysis by LPMOs requires the reduction of the active-site copper from Cu(II) to Cu(I) by a reducing agent and H(2)O(2) or O(2) as a cosubstrate. Is able to cleave phosphoric acid swollen cellulose (PASC) in the presence of a reducing agent, yielding a range of cellooligosaccharides dominated by cellobiose and cellotriose. Activity is less sensitive to the reducing agent potential when cleaving xylan, suggesting that distinct catalytic mechanisms exist for xylan and glucan cleavage. The sequence is that of AA9 family lytic polysaccharide monooxygenase A from Panus similis (Lentinoid fungus).